We begin with the raw amino-acid sequence, 476 residues long: Proline--tRNA ligase 2 (476 aa).

The protein belongs to the class-II aminoacyl-tRNA synthetase family. ProS type 3 subfamily. In terms of assembly, homodimer.

The protein localises to the cytoplasm. The enzyme catalyses tRNA(Pro) + L-proline + ATP = L-prolyl-tRNA(Pro) + AMP + diphosphate. Functionally, catalyzes the attachment of proline to tRNA(Pro) in a two-step reaction: proline is first activated by ATP to form Pro-AMP and then transferred to the acceptor end of tRNA(Pro). This Bacillus cereus (strain ZK / E33L) protein is Proline--tRNA ligase 2.